Here is a 431-residue protein sequence, read N- to C-terminus: Adenylosuccinate lyase (431 aa).

Residues 4–5 (RY), 67–69 (RHD), and 93–94 (TS) each bind N(6)-(1,2-dicarboxyethyl)-AMP. Catalysis depends on histidine 141, which acts as the Proton donor/acceptor. Glutamine 212 is a binding site for N(6)-(1,2-dicarboxyethyl)-AMP. The Proton donor/acceptor role is filled by serine 262. N(6)-(1,2-dicarboxyethyl)-AMP is bound by residues serine 263, 268-270 (KRN), asparagine 276, and 307-311 (SAERI).

The protein belongs to the lyase 1 family. Adenylosuccinate lyase subfamily. Homodimer and homotetramer. Residues from neighboring subunits contribute catalytic and substrate-binding residues to each active site.

It catalyses the reaction N(6)-(1,2-dicarboxyethyl)-AMP = fumarate + AMP. The enzyme catalyses (2S)-2-[5-amino-1-(5-phospho-beta-D-ribosyl)imidazole-4-carboxamido]succinate = 5-amino-1-(5-phospho-beta-D-ribosyl)imidazole-4-carboxamide + fumarate. The protein operates within purine metabolism; AMP biosynthesis via de novo pathway; AMP from IMP: step 2/2. It participates in purine metabolism; IMP biosynthesis via de novo pathway; 5-amino-1-(5-phospho-D-ribosyl)imidazole-4-carboxamide from 5-amino-1-(5-phospho-D-ribosyl)imidazole-4-carboxylate: step 2/2. Catalyzes two reactions in de novo purine nucleotide biosynthesis. Catalyzes the breakdown of 5-aminoimidazole- (N-succinylocarboxamide) ribotide (SAICAR or 2-[5-amino-1-(5-phospho-beta-D-ribosyl)imidazole-4-carboxamido]succinate) to 5-aminoimidazole-4-carboxamide ribotide (AICAR or 5-amino-1-(5-phospho-beta-D-ribosyl)imidazole-4-carboxamide) and fumarate, and of adenylosuccinate (ADS or N(6)-(1,2-dicarboxyethyl)-AMP) to adenosine monophosphate (AMP) and fumarate. The chain is Adenylosuccinate lyase (purB) from Staphylococcus aureus (strain USA300).